The chain runs to 208 residues: Translation initiation factor IF-3 (208 aa).

The protein belongs to the IF-3 family. Monomer.

The protein resides in the cytoplasm. IF-3 binds to the 30S ribosomal subunit and shifts the equilibrium between 70S ribosomes and their 50S and 30S subunits in favor of the free subunits, thus enhancing the availability of 30S subunits on which protein synthesis initiation begins. This Parabacteroides distasonis (strain ATCC 8503 / DSM 20701 / CIP 104284 / JCM 5825 / NCTC 11152) protein is Translation initiation factor IF-3.